Here is a 436-residue protein sequence, read N- to C-terminus: UDP-N-acetylmuramate--L-alanine ligase (436 aa).

108–114 (GAHGKTS) is a binding site for ATP.

It belongs to the MurCDEF family.

It localises to the cytoplasm. The catalysed reaction is UDP-N-acetyl-alpha-D-muramate + L-alanine + ATP = UDP-N-acetyl-alpha-D-muramoyl-L-alanine + ADP + phosphate + H(+). It participates in cell wall biogenesis; peptidoglycan biosynthesis. Cell wall formation. The sequence is that of UDP-N-acetylmuramate--L-alanine ligase from Bacillus cytotoxicus (strain DSM 22905 / CIP 110041 / 391-98 / NVH 391-98).